We begin with the raw amino-acid sequence, 245 residues long: Dof zinc finger protein DOF3.2 (245 aa).

Residues 15–26 (SCSTQDYQNQKK) show a composition bias toward polar residues. Residues 15 to 41 (SCSTQDYQNQKKPLSATRPAPPEQSLR) form a disordered region. The Dof-type zinc finger occupies 40–94 (LRCPRCDSTNTKFCYYNNYSLSQPRYFCKSCRRYWTKGGILRNIPIGGAYRKHKR). Zn(2+) contacts are provided by C42, C45, C67, and C70. Residues 91–118 (KHKRSSSATKSLRTTPEPTMTHDGKSFP) form a disordered region. Residues 96–108 (SSATKSLRTTPEP) are compositionally biased toward polar residues.

As to quaternary structure, interacts with TCP14. As to expression, the PEAR proteins (e.g. DOF2.4, DOF5.1, DOF3.2, DOF1.1, DOF5.6 and DOF5.3) form a short-range concentration gradient that peaks at protophloem sieve elements (PSE).

It is found in the nucleus. In terms of biological role, transcription factor that negatively affects seed germination and opposes TCP14 function in the regulation of a specific set of abscisic acid-related genes. The PEAR proteins (e.g. DOF2.4, DOF5.1, DOF3.2, DOF1.1, DOF5.6 and DOF5.3) activate gene expression that promotes radial growth of protophloem sieve elements. The protein is Dof zinc finger protein DOF3.2 of Arabidopsis thaliana (Mouse-ear cress).